Consider the following 382-residue polypeptide: O-methyltransferase okaF (382 aa).

S-adenosyl-L-methionine is bound by residues E249 and R287. H291 functions as the Proton acceptor in the catalytic mechanism.

This sequence belongs to the class I-like SAM-binding methyltransferase superfamily. Cation-independent O-methyltransferase family.

It carries out the reaction 3-desmethyl okaramine B + S-adenosyl-L-methionine = okaramine B + S-adenosyl-L-homocysteine + H(+). Its pathway is alkaloid biosynthesis. Functionally, O-methyltransferase; part of the gene cluster that mediates the biosynthesis of okaramine B, a prenylated indole alkaloid that possesses an unusual octacyclic ring system, including a four-membered azetidine ring and an eight-membered azocine ring, and that exhibits insecticidal activity against silkworm larvae. Within the pathway, okaF catalyzes the last step which is the methylation of 3-desmethyl okaramine B to produce okaramine B. With okaG, OkaF is also able to produce okaramine D from okaramine E. The biosynthesis begins with the NRPS okaA that condenses two tryptophan molecules into cyclo(L-Trp-L-Trp). Prenylation by the prenyltransferase okaC then leads to the formation of cyclo(N8-(alpha,alpha-dimethylallyl)-L-Trp-6a-(alpha,alpha-dime-thylallyl)-L-Trp). This is followed by indole 2,3-epoxidation by the FAD-dependent monooxygenase okaB to facilitate the formation of the hexahydropyrrolo[2,3-b]indole (HPI) moiety of okaramine C. The cytochrome P450 monooxygenase okaD then likely catalyzes formation of the eight-membered ring of okaramine A. The dioxygenase okaE further forms the unusual 2-dimethyl-3-methyl-azetidine ring to yield 12-deshydroxyl okaramine E, as well as the hydroxylation of 12-deshydroxyl okaramine E to produce okaramine E. The cytochrome P450 monoxygenase okaG converts 12-deshydroxyl okaramine E into 3-desmethyl okaramine B which is further methylated by the methyltransferase okaF into okaramine B. In a shunt pathway, okaG and okaF together are also able to convert okaramine E into okaramine D. Okaramine H is produced by nonenzymatic conversion from okaramine A. The chain is O-methyltransferase okaF from Penicillium ochrochloron.